The chain runs to 698 residues: Methionine--tRNA ligase (698 aa).

A 'HIGH' region motif is present at residues Pro21–His31. Residues Cys153, Cys156, Cys166, and Cys169 each coordinate Zn(2+). The short motif at Gln341–Ser345 is the 'KMSKS' region element. ATP is bound at residue Lys344. One can recognise a tRNA-binding domain in the interval Asp599–Ser698.

Belongs to the class-I aminoacyl-tRNA synthetase family. MetG type 1 subfamily. Homodimer. Requires Zn(2+) as cofactor.

It localises to the cytoplasm. The catalysed reaction is tRNA(Met) + L-methionine + ATP = L-methionyl-tRNA(Met) + AMP + diphosphate. In terms of biological role, is required not only for elongation of protein synthesis but also for the initiation of all mRNA translation through initiator tRNA(fMet) aminoacylation. This Protochlamydia amoebophila (strain UWE25) protein is Methionine--tRNA ligase.